The chain runs to 559 residues: Large neutral amino acids transporter small subunit 3 (559 aa).

A helical transmembrane segment spans residues 20–40 (VLENLFFSAVLLGWGSLLIIL). N-linked (GlcNAc...) asparagine glycosylation is present at Asn-57. 5 consecutive transmembrane segments (helical) span residues 78 to 98 (LGFTIGSFVLSATTLPLGILM), 105 to 124 (PVRLVGSACFTASCTLMALA), 131 to 151 (LSPLIFLALSLNGFGGICLTF), 168 to 188 (MALMIGSYASSAITFPGIKLI), and 191 to 211 (AGVAFVVIMFTWSGLACLIFL). Asn-212 and Asn-229 each carry an N-linked (GlcNAc...) asparagine glycan. Phosphoserine is present on residues Ser-237, Ser-262, and Ser-267. The next 6 helical transmembrane spans lie at 304 to 324 (FLWSLLTMGMTQLRIIFYMAA), 357 to 377 (SVFGAMQLLCLLTCPLIGYIM), 419 to 439 (AISAFTLTNLLLVGFGITCLI), 446 to 466 (FVTFVLHTIVRGFFHSACGSL), 485 to 505 (LISAVFALLQQPLFMAMVGPL), and 510 to 530 (FWVNLGLLLFSLLGFLLPSYL).

It belongs to the SLC43A transporter (TC 2.A.1.44) family. In terms of tissue distribution, ubiquitously expressed in fetus and adult. Highest expression in adult pancreas, liver, skeletal muscle. In fetus, highest expression in liver and lower levels in kidney, and lung. Exclusively expressed in the glomeruli along the glomerular capillary walls.

The protein resides in the cell membrane. It localises to the apical cell membrane. It is found in the endoplasmic reticulum membrane. The enzyme catalyses D-leucine(in) = D-leucine(out). It catalyses the reaction L-leucine(in) = L-leucine(out). It carries out the reaction L-isoleucine(in) = L-isoleucine(out). The catalysed reaction is L-methionine(in) = L-methionine(out). The enzyme catalyses L-phenylalanine(in) = L-phenylalanine(out). It catalyses the reaction L-valine(in) = L-valine(out). Functionally, uniport that mediates the transport of neutral amino acids such as L-leucine, L-isoleucine, L-valine, and L-phenylalanine. The transport activity is sodium ions-independent, electroneutral and mediated by a facilitated diffusion. The sequence is that of Large neutral amino acids transporter small subunit 3 from Homo sapiens (Human).